The sequence spans 138 residues: D-ribose pyranase (138 aa).

The Proton donor role is filled by His-20. Residues Asp-28, His-105, and 127–129 (YAN) each bind substrate.

The protein belongs to the RbsD / FucU family. RbsD subfamily. Homodecamer.

Its subcellular location is the cytoplasm. The catalysed reaction is beta-D-ribopyranose = beta-D-ribofuranose. The protein operates within carbohydrate metabolism; D-ribose degradation; D-ribose 5-phosphate from beta-D-ribopyranose: step 1/2. Catalyzes the interconversion of beta-pyran and beta-furan forms of D-ribose. The sequence is that of D-ribose pyranase from Psychromonas ingrahamii (strain DSM 17664 / CCUG 51855 / 37).